The sequence spans 120 residues: V-type proton ATPase subunit F (120 aa).

The protein belongs to the V-ATPase F subunit family. In terms of assembly, V-ATPase is a heteromultimeric enzyme composed of a peripheral catalytic V1 complex (components A to H) attached to an integral membrane V0 proton pore complex (components: a, c, c', c'' and d).

In terms of biological role, subunit of the peripheral V1 complex of vacuolar ATPase essential for assembly or catalytic function. V-ATPase is responsible for acidifying a variety of intracellular compartments in eukaryotic cells. The polypeptide is V-type proton ATPase subunit F (vatF) (Dictyostelium discoideum (Social amoeba)).